A 275-amino-acid polypeptide reads, in one-letter code: Dermonecrotic toxin SpeSicTox-betaIIA3ii (275 aa).

His5 is a catalytic residue. The Mg(2+) site is built by Glu25 and Asp27. The Nucleophile role is filled by His41. Disulfide bonds link Cys45-Cys51 and Cys47-Cys190. Mg(2+) is bound at residue Asp85.

The protein belongs to the arthropod phospholipase D family. Class II subfamily. Mg(2+) is required as a cofactor. In terms of tissue distribution, expressed by the venom gland.

It is found in the secreted. The catalysed reaction is an N-(acyl)-sphingosylphosphocholine = an N-(acyl)-sphingosyl-1,3-cyclic phosphate + choline. It carries out the reaction an N-(acyl)-sphingosylphosphoethanolamine = an N-(acyl)-sphingosyl-1,3-cyclic phosphate + ethanolamine. The enzyme catalyses a 1-acyl-sn-glycero-3-phosphocholine = a 1-acyl-sn-glycero-2,3-cyclic phosphate + choline. It catalyses the reaction a 1-acyl-sn-glycero-3-phosphoethanolamine = a 1-acyl-sn-glycero-2,3-cyclic phosphate + ethanolamine. In terms of biological role, dermonecrotic toxins cleave the phosphodiester linkage between the phosphate and headgroup of certain phospholipids (sphingolipid and lysolipid substrates), forming an alcohol (often choline) and a cyclic phosphate. This toxin acts on sphingomyelin (SM). It may also act on ceramide phosphoethanolamine (CPE), lysophosphatidylcholine (LPC) and lysophosphatidylethanolamine (LPE), but not on lysophosphatidylserine (LPS), and lysophosphatidylglycerol (LPG). It acts by transphosphatidylation, releasing exclusively cyclic phosphate products as second products. Induces dermonecrosis, hemolysis, increased vascular permeability, edema, inflammatory response, and platelet aggregation. In Sicarius peruensis (Six-eyed sand spider), this protein is Dermonecrotic toxin SpeSicTox-betaIIA3ii.